Here is a 542-residue protein sequence, read N- to C-terminus: Chaperonin GroEL (542 aa).

Residues Thr-29–Pro-32, Asp-86–Thr-90, Gly-413, Asn-476–Ala-478, and Asp-492 each bind ATP.

This sequence belongs to the chaperonin (HSP60) family. As to quaternary structure, forms a cylinder of 14 subunits composed of two heptameric rings stacked back-to-back. Interacts with the co-chaperonin GroES.

It localises to the cytoplasm. It carries out the reaction ATP + H2O + a folded polypeptide = ADP + phosphate + an unfolded polypeptide.. Its function is as follows. Together with its co-chaperonin GroES, plays an essential role in assisting protein folding. The GroEL-GroES system forms a nano-cage that allows encapsulation of the non-native substrate proteins and provides a physical environment optimized to promote and accelerate protein folding. The chain is Chaperonin GroEL from Lactococcus lactis subsp. cremoris (strain SK11).